A 678-amino-acid chain; its full sequence is AAC-rich mRNA clone AAC4 protein (678 aa).

The segment covering Asn55–Asn73 has biased composition (low complexity). Positions Asn55 to Ser75 are disordered. The chain crosses the membrane as a helical span at residues Ile243–Tyr263. A compositionally biased stretch (low complexity) spans Asn318–Asn346. The tract at residues Asn318–Gln347 is disordered.

It is found in the membrane. This Dictyostelium discoideum (Social amoeba) protein is AAC-rich mRNA clone AAC4 protein (AAC4).